Here is a 1199-residue protein sequence, read N- to C-terminus: Chromosome partition protein Smc (1199 aa).

32–39 (PNGSGKSN) contacts ATP. Positions 192-528 (GVAEFDEKSE…NARIKTLKDM (337 aa)) form a coiled coil. The SMC hinge domain maps to 546-658 (PGVVDIAGNL…VDNLENAKKL (113 aa)). The stretch at 691-1051 (IKVDIDMKKL…YLQLISEVQK (361 aa)) forms a coiled coil.

Belongs to the SMC family. In terms of assembly, homodimer.

The protein localises to the cytoplasm. Required for chromosome condensation and partitioning. This chain is Chromosome partition protein Smc, found in Methanococcus voltae.